The chain runs to 709 residues: Elongation factor G (709 aa).

Residues 8 to 297 (ANTRNIGIMA…AVIDYLPSPL (290 aa)) form the tr-type G domain. Residues 17-24 (AHVDAGKT), 81-85 (DTPGH), and 135-138 (NKMD) each bind GTP.

The protein belongs to the TRAFAC class translation factor GTPase superfamily. Classic translation factor GTPase family. EF-G/EF-2 subfamily.

It is found in the cytoplasm. Its function is as follows. Catalyzes the GTP-dependent ribosomal translocation step during translation elongation. During this step, the ribosome changes from the pre-translocational (PRE) to the post-translocational (POST) state as the newly formed A-site-bound peptidyl-tRNA and P-site-bound deacylated tRNA move to the P and E sites, respectively. Catalyzes the coordinated movement of the two tRNA molecules, the mRNA and conformational changes in the ribosome. In Lactococcus lactis subsp. cremoris (strain MG1363), this protein is Elongation factor G.